Here is a 179-residue protein sequence, read N- to C-terminus: Large ribosomal subunit protein uL5 (179 aa).

It belongs to the universal ribosomal protein uL5 family. As to quaternary structure, part of the 50S ribosomal subunit; part of the 5S rRNA/L5/L18/L25 subcomplex. Contacts the 5S rRNA and the P site tRNA. Forms a bridge to the 30S subunit in the 70S ribosome.

In terms of biological role, this is one of the proteins that bind and probably mediate the attachment of the 5S RNA into the large ribosomal subunit, where it forms part of the central protuberance. In the 70S ribosome it contacts protein S13 of the 30S subunit (bridge B1b), connecting the 2 subunits; this bridge is implicated in subunit movement. Contacts the P site tRNA; the 5S rRNA and some of its associated proteins might help stabilize positioning of ribosome-bound tRNAs. This chain is Large ribosomal subunit protein uL5, found in Geobacter sulfurreducens (strain ATCC 51573 / DSM 12127 / PCA).